The sequence spans 355 residues: Sesquiterpene synthase MAJ_08936 (355 aa).

Asp-91 and Asp-96 together coordinate Mg(2+). A DDXXXD motif motif is present at residues 91–96; it reads DDLFVD. Position 184 (Arg-184) interacts with substrate. Mg(2+)-binding residues include Asn-230, Ser-234, and Glu-238.

This sequence belongs to the terpene synthase family. It depends on Mg(2+) as a cofactor.

It carries out the reaction (2E,6E)-farnesyl diphosphate + H2O = (+)-corvol ether B + diphosphate. The enzyme catalyses (2E,6E)-farnesyl diphosphate + H2O = (+)-corvol ether A + diphosphate. Terpene synthase that catalyzes the conversion of (2E,6E)-farnesyl diphosphate (FPP) into sesquiterpenes which are important for fungi-environment interactions. Produces a mixture consisting of 8 sesquiterpenes including corvol ethers A and B, as well as traces of epizonarene, gamma-cadinene, delta-cadinene, alpha-cadinene, alpha-cadinol, and an unidentified sesquiterpene. The major product is corvol ether A. The sequence is that of Sesquiterpene synthase MAJ_08936 from Metarhizium majus (strain ARSEF 297).